We begin with the raw amino-acid sequence, 622 residues long: Chaperone protein HscA homolog (622 aa).

It belongs to the heat shock protein 70 family.

Chaperone involved in the maturation of iron-sulfur cluster-containing proteins. Has a low intrinsic ATPase activity which is markedly stimulated by HscB. The protein is Chaperone protein HscA homolog of Burkholderia pseudomallei (strain 1710b).